Here is an 895-residue protein sequence, read N- to C-terminus: Plasma membrane ATPase 1 (895 aa).

Residues 1–53 form a disordered region; that stretch reads MSATEPTNEKVDKIVSDDEDEDIDQLVADLQSNPGAGDEEEEEENDSSFKAVP. The Cytoplasmic segment spans residues 1–92; that stretch reads MSATEPTNEK…AEEQENLVLK (92 aa). The span at 7–16 shows a compositional bias: basic and acidic residues; sequence TNEKVDKIVS. Residues 37–46 are compositionally biased toward acidic residues; sequence GDEEEEEEND. The chain crosses the membrane as a helical span at residues 93 to 113; that stretch reads FVMFFVGPIQFVMEAAAVLAA. Topologically, residues 114–117 are extracellular; that stretch reads GLED. Residues 118-137 form a helical membrane-spanning segment; sequence WVDFGVICALLLLNAFVGFI. Over 138–268 the chain is Cytoplasmic; that stretch reads QEYQAGSIVD…GTGHFTEVLN (131 aa). The chain crosses the membrane as a helical span at residues 269–290; sequence GIGTTLLVFVIVTLLVVWVACF. Residues 291-301 are Extracellular-facing; the sequence is YRTVRIVPILR. The chain crosses the membrane as a helical span at residues 302–324; sequence YTLAITIIGVPVGLPAVVTTTMA. At 325-696 the chain is on the cytoplasmic side; the sequence is VGAAYLAKKQ…IAILNRSLDI (372 aa). The active-site 4-aspartylphosphate intermediate is Asp-355. Residues Asp-611 and Asp-615 each coordinate Mg(2+). A helical membrane pass occupies residues 697–715; sequence NLIVFIAIFADVATLAIAY. The Extracellular portion of the chain corresponds to 716–731; the sequence is DNAPYDPKPVKWNLPR. A helical membrane pass occupies residues 732–751; it reads LWGMSIVLGIILAIGTWITL. The Cytoplasmic portion of the chain corresponds to 752 to 801; it reads TTMLLPKGGIIQNFGGLDGILFLQISLTENWLIFVTRAQGPFWSSIPSWQ. The helical transmembrane segment at 802-822 threads the bilayer; sequence LSGAVLIVDIIATCFTLFGWW. Over 823–834 the chain is Extracellular; that stretch reads SQNWTDIVTVVR. The helical transmembrane segment at 835-851 threads the bilayer; that stretch reads TWIWSFGVFCVMGGAYY. Residues 852–895 lie on the Cytoplasmic side of the membrane; the sequence is LMSTSEAFDNFCNGRKPQQHTDKRSLEDFLVSMQRVSTQHEKST.

This sequence belongs to the cation transport ATPase (P-type) (TC 3.A.3) family. Type IIIA subfamily.

It is found in the cell membrane. The catalysed reaction is ATP + H2O + H(+)(in) = ADP + phosphate + 2 H(+)(out). Its function is as follows. The plasma membrane ATPase of plants and fungi is a hydrogen ion pump. The proton gradient it generates drives the active transport of nutrients by H(+)-symport. The resulting external acidification and/or internal alkinization may mediate growth responses. The protein is Plasma membrane ATPase 1 (PMA1) of Candida albicans (Yeast).